The sequence spans 446 residues: 3-phosphoshikimate 1-carboxyvinyltransferase (446 aa).

Residues Lys35, Ser36, and Arg40 each contribute to the 3-phosphoshikimate site. Lys35 contributes to the phosphoenolpyruvate binding site. Residues Gly108 and Arg137 each contribute to the phosphoenolpyruvate site. 3-phosphoshikimate-binding residues include Ser182, Gln184, Asp332, and Lys359. Gln184 is a binding site for phosphoenolpyruvate. Residue Asp332 is the Proton acceptor of the active site. Phosphoenolpyruvate is bound by residues Arg363 and Arg405.

It belongs to the EPSP synthase family. Monomer.

The protein resides in the cytoplasm. It carries out the reaction 3-phosphoshikimate + phosphoenolpyruvate = 5-O-(1-carboxyvinyl)-3-phosphoshikimate + phosphate. Its pathway is metabolic intermediate biosynthesis; chorismate biosynthesis; chorismate from D-erythrose 4-phosphate and phosphoenolpyruvate: step 6/7. Functionally, catalyzes the transfer of the enolpyruvyl moiety of phosphoenolpyruvate (PEP) to the 5-hydroxyl of shikimate-3-phosphate (S3P) to produce enolpyruvyl shikimate-3-phosphate and inorganic phosphate. In Acaryochloris marina (strain MBIC 11017), this protein is 3-phosphoshikimate 1-carboxyvinyltransferase.